A 122-amino-acid polypeptide reads, in one-letter code: Small ribosomal subunit protein uS13 (122 aa).

The disordered stretch occupies residues 99–122 (RGQRTHTNARTRKGPAKAIAGKKK).

This sequence belongs to the universal ribosomal protein uS13 family. Part of the 30S ribosomal subunit. Forms a loose heterodimer with protein S19. Forms two bridges to the 50S subunit in the 70S ribosome.

Located at the top of the head of the 30S subunit, it contacts several helices of the 16S rRNA. In the 70S ribosome it contacts the 23S rRNA (bridge B1a) and protein L5 of the 50S subunit (bridge B1b), connecting the 2 subunits; these bridges are implicated in subunit movement. Contacts the tRNAs in the A and P-sites. This is Small ribosomal subunit protein uS13 from Cereibacter sphaeroides (strain ATCC 17029 / ATH 2.4.9) (Rhodobacter sphaeroides).